Reading from the N-terminus, the 559-residue chain is Leucine-rich repeat protein soc-2 (559 aa).

The segment covering 1–17 has biased composition (basic and acidic residues); the sequence is METSKEFEFRPAKETSR. Positions 1 to 55 are disordered; that stretch reads METSKEFEFRPAKETSRSKSPGGIVGRLSNFARNKARHSLSEKGSNSVGGSGGAG. 20 LRR repeats span residues 74 to 95, 97 to 118, 120 to 142, 143 to 164, 166 to 187, 189 to 210, 212 to 233, 235 to 256, 258 to 279, 281 to 302, 305 to 326, 329 to 350, 353 to 374, 376 to 397, 399 to 420, 422 to 443, 445 to 466, 468 to 489, 491 to 513, and 515 to 536; these read QDQRLDLSSIEITSIPSPIKEL, QLTELFLYKNKLTCLPTEIGQL, NLKKLGLSENALTSLPDSLASLE, SLETLDLRHNKLTEVPSVIYKI, SLETLWLRYNRIVAVDEQIGNL, KLKMLDVRENKIRELPSAIGKL, SLVVCLVSYNHLTRVPEEIGDC, SLTQLDLQHNDLSELPYSIGKL, NLVRIGIRYNKIRCIPSELESC, QLEEFIVESNHLQLLPPNLLTM, KIHTVNLSRNELTAFPAGGPQQ, STVTINMEHNQISKIPIGIFSK, RLTKLNLKENELVSLPLDMGSW, SITELNLSTNQLKVLPEDIEKL, NLEILVLSNNQLKKLPNQIGNL, KLRELDLEENELETVPTEIGFL, HLTKLWVQSNKILTLPRSIGNL, SLQDLRLGENNLTAIPEEIGHL, SLKSLYLNDNSSLHNLPFELALC, and SLEIMSIENSPLSQIPPEITAG.

Belongs to the SHOC2 family. Interacts with let-60.

Functionally, acts as a Ras effector and participates in MAPK pathway activation. Probably acts as a scaffolding protein in a protein phosphatase complex that specifically dephosphorylates Raf kinase and stimulates Raf activity at specialized signaling complexes upon Ras activation. Required for vulval development. Involved in fluid homeostasis. Plays a role in nicotinic acetylcholine receptor (nAChR)-mediated sensitivity to nicotine. This Caenorhabditis elegans protein is Leucine-rich repeat protein soc-2 (soc-2).